The following is a 746-amino-acid chain: MTHELSSTPQIDLLNDILKNSVESNVFSDYQKKQIVTLILKSKISTAIVLLSPKSTAASEWNYLCNLQDLHECVLCVDTILPANLQTIAKRIFSLVLLPPLNDWCKQLRDAFLRFVSQPSICPTDFPLKLFFLSTVGIELLIVNEKIIPQKTQKYLLYELFSSPSSITANEIARLCQEANNRNYLLQSLTSATDARRAFLNNPNYRLLSAIIFQDGPSNLAFVLAKDCVLLARQPETIPVSFERMSSLLLMCLPSHPDFISPEFCHEWTELAERNGLQEEWLNILNTACNFKECRAIIHKECSEFIKDNHTSRVAILISMKLAFQYQLSQVIPTLKLLLQSKVYDSVLLEALRQSSTLGPVKQLIADDSCLLNNLSKLLLDTNISPLDASSIATIIYNMCKFKITKSEHERELNQLRNMAEASKTIDYKEDETAPTERRIQKILEYDILSKLFSAAKHYNSLNGLLAMILVHMANYKLARRKLVQIGALKFLTRQCFIQTQDSNAAFALAKILISVAPHSIFTKAFPSNRAIHPMSKLLSTNSADTEYPILLGKFEVLLALTNLASHDEESRQAIVQECWRELDELIIETNPLIQRATTELINNLSLSPYCLIKFIGDKDSDFENTRLHIVLALSDTEDTPTRLAACGILVQITSVDEGCKKILSLQNDFNYIVRMLTDQDEGIQHRGLVCICNIVYSKDQEIFNKFIKTPKAVETLRTYITKQAALKELQHEALVMIDSRLQGSK.

It is found in the cytoplasm. Functionally, essential for actinomyosin ring assembly during cytokinesis. Has a role, in conjunction with F-actin, in assembling myosin II-containing proteins, such as myo2, at the division site. The sequence is that of Ring assembly protein 3 (rng3) from Schizosaccharomyces pombe (strain 972 / ATCC 24843) (Fission yeast).